The chain runs to 388 residues: Bifunctional enzyme IspD/IspF (388 aa).

Residues 1–228 (MRIAALLLAA…GVIDRNLLPR (228 aa)) are 2-C-methyl-D-erythritol 4-phosphate cytidylyltransferase. A 2-C-methyl-D-erythritol 2,4-cyclodiphosphate synthase region spans residues 228–388 (RVGLGYDVHA…SIMVPDNGEA (161 aa)). Residues aspartate 234 and histidine 236 each contribute to the a divalent metal cation site. Residues 234-236 (DVH) and 260-261 (HS) each bind 4-CDP-2-C-methyl-D-erythritol 2-phosphate. Residue histidine 268 participates in a divalent metal cation binding. 4-CDP-2-C-methyl-D-erythritol 2-phosphate-binding positions include 282 to 284 (DIG), 358 to 361 (TTSE), phenylalanine 365, and arginine 368.

This sequence in the N-terminal section; belongs to the IspD/TarI cytidylyltransferase family. IspD subfamily. It in the C-terminal section; belongs to the IspF family. Requires a divalent metal cation as cofactor.

The catalysed reaction is 2-C-methyl-D-erythritol 4-phosphate + CTP + H(+) = 4-CDP-2-C-methyl-D-erythritol + diphosphate. It catalyses the reaction 4-CDP-2-C-methyl-D-erythritol 2-phosphate = 2-C-methyl-D-erythritol 2,4-cyclic diphosphate + CMP. It participates in isoprenoid biosynthesis; isopentenyl diphosphate biosynthesis via DXP pathway; isopentenyl diphosphate from 1-deoxy-D-xylulose 5-phosphate: step 2/6. Its pathway is isoprenoid biosynthesis; isopentenyl diphosphate biosynthesis via DXP pathway; isopentenyl diphosphate from 1-deoxy-D-xylulose 5-phosphate: step 4/6. Bifunctional enzyme that catalyzes the formation of 4-diphosphocytidyl-2-C-methyl-D-erythritol from CTP and 2-C-methyl-D-erythritol 4-phosphate (MEP) (IspD), and catalyzes the conversion of 4-diphosphocytidyl-2-C-methyl-D-erythritol 2-phosphate (CDP-ME2P) to 2-C-methyl-D-erythritol 2,4-cyclodiphosphate (ME-CPP) with a corresponding release of cytidine 5-monophosphate (CMP) (IspF). The protein is Bifunctional enzyme IspD/IspF of Gluconobacter oxydans (strain 621H) (Gluconobacter suboxydans).